A 468-amino-acid chain; its full sequence is 3-isopropylmalate dehydratase large subunit (468 aa).

[4Fe-4S] cluster is bound by residues Cys347, Cys407, and Cys410.

It belongs to the aconitase/IPM isomerase family. LeuC type 1 subfamily. As to quaternary structure, heterodimer of LeuC and LeuD. It depends on [4Fe-4S] cluster as a cofactor.

It carries out the reaction (2R,3S)-3-isopropylmalate = (2S)-2-isopropylmalate. It participates in amino-acid biosynthesis; L-leucine biosynthesis; L-leucine from 3-methyl-2-oxobutanoate: step 2/4. Functionally, catalyzes the isomerization between 2-isopropylmalate and 3-isopropylmalate, via the formation of 2-isopropylmaleate. This is 3-isopropylmalate dehydratase large subunit from Synechocystis sp. (strain ATCC 27184 / PCC 6803 / Kazusa).